Reading from the N-terminus, the 312-residue chain is DNA-directed RNA polymerase subunit alpha (312 aa).

The interval Met-1–Thr-226 is alpha N-terminal domain (alpha-NTD). The tract at residues Asn-242–Lys-312 is alpha C-terminal domain (alpha-CTD).

This sequence belongs to the RNA polymerase alpha chain family. As to quaternary structure, homodimer. The RNAP catalytic core consists of 2 alpha, 1 beta, 1 beta' and 1 omega subunit. When a sigma factor is associated with the core the holoenzyme is formed, which can initiate transcription.

The enzyme catalyses RNA(n) + a ribonucleoside 5'-triphosphate = RNA(n+1) + diphosphate. Its function is as follows. DNA-dependent RNA polymerase catalyzes the transcription of DNA into RNA using the four ribonucleoside triphosphates as substrates. The protein is DNA-directed RNA polymerase subunit alpha of Streptococcus thermophilus (strain CNRZ 1066).